Consider the following 244-residue polypeptide: 1-(5-phosphoribosyl)-5-[(5-phosphoribosylamino)methylideneamino] imidazole-4-carboxamide isomerase (244 aa).

Catalysis depends on Asp-10, which acts as the Proton acceptor. Asp-132 functions as the Proton donor in the catalytic mechanism.

This sequence belongs to the HisA/HisF family.

The protein resides in the cytoplasm. It carries out the reaction 1-(5-phospho-beta-D-ribosyl)-5-[(5-phospho-beta-D-ribosylamino)methylideneamino]imidazole-4-carboxamide = 5-[(5-phospho-1-deoxy-D-ribulos-1-ylimino)methylamino]-1-(5-phospho-beta-D-ribosyl)imidazole-4-carboxamide. It functions in the pathway amino-acid biosynthesis; L-histidine biosynthesis; L-histidine from 5-phospho-alpha-D-ribose 1-diphosphate: step 4/9. The sequence is that of 1-(5-phosphoribosyl)-5-[(5-phosphoribosylamino)methylideneamino] imidazole-4-carboxamide isomerase from Xanthomonas oryzae pv. oryzae (strain MAFF 311018).